Reading from the N-terminus, the 187-residue chain is CASP-like protein 3A2 (187 aa).

The Cytoplasmic segment spans residues 1 to 24 (MTSNGEGGEVVAKRRRKGIKELVQ). A helical transmembrane segment spans residues 25–45 (VALRGGCLAASATAMAVMLTA). At 46-71 (TEEGVADIYGFKLTLSSNWSFSPSYQ) the chain is on the extracellular side. Asn63 carries N-linked (GlcNAc...) asparagine glycosylation. The helical transmembrane segment at 72–92 (YVVGACAGTVLYSLLQLCLGV) threads the bilayer. Residues 93-107 (YRLVTGSPITPSRFQ) lie on the Cytoplasmic side of the membrane. Residues 108–128 (AWLCFTSDQLFCYLMMSAGSA) form a helical membrane-spanning segment. At 129 to 162 (GSGVTNLNKTGIRHTPLPDFCKTLSSFCNHVALS) the chain is on the extracellular side. Asn136 carries an N-linked (GlcNAc...) asparagine glycan. The chain crosses the membrane as a helical span at residues 163–183 (LLLVFLSFIFLASSSFFTVLV). Residues 184–187 (LSTP) lie on the Cytoplasmic side of the membrane.

The protein belongs to the Casparian strip membrane proteins (CASP) family. Homodimer and heterodimers.

Its subcellular location is the cell membrane. The sequence is that of CASP-like protein 3A2 from Arabidopsis thaliana (Mouse-ear cress).